The following is a 335-amino-acid chain: Transcription factor E2F5 (335 aa).

Residues 1–18 (MAAAEPTSSAQPTPQAQA) are compositionally biased toward low complexity. A disordered region spans residues 1–40 (MAAAEPTSSAQPTPQAQAQPPPHGAPSSQPSAALAGGSSR). A DNA-binding region spans residues 37–108 (GSSRHEKSLG…KNSIQWKGVG (72 aa)). A leucine-zipper region spans residues 66-88 (LKAAADTLAVRQKRRIYDITNVL). The short motif at 71–108 (DTLAVRQKRRIYDITNVLEGIDLIEKKSKNSIQWKGVG) is the DEF box element. Residues 109–205 (AGCNTKEVID…GQNGQKKYQI (97 aa)) form a dimerization region. The interval 226–285 (SKPVVFPVPPPDDLTQPSSQSSTSVTPQKSTMAAQNLPEQHVSERSQTFQQTPAAEVSSG) is disordered. Low complexity predominate over residues 238-256 (DLTQPSSQSSTSVTPQKST). Positions 277–335 (TPAAEVSSGSISGDIIDELMSSDVFPLLRLSPTPADDYNFNLDDNEGVCDLFDVQILNY) are transactivation. Residues 312 to 329 (DDYNFNLDDNEGVCDLFD) form an RBL2 association region.

This sequence belongs to the E2F/DP family. In terms of assembly, component of the DRTF1/E2F transcription factor complex. Binds cooperatively with DP-1 to E2F sites. Interaction with retinoblastoma protein RB1 or proteins RBL1 and RBL2 inhibits the E2F transactivation domain. Component of the DREAM complex (also named LINC complex) at least composed of E2F4, E2F5, LIN9, LIN37, LIN52, LIN54, MYBL1, MYBL2, RBL1, RBL2, RBBP4, TFDP1 and TFDP2. The complex exists in quiescent cells where it represses cell cycle-dependent genes. It dissociates in S phase when LIN9, LIN37, LIN52 and LIN54 form a subcomplex that binds to MYBL2.

It localises to the nucleus. Its function is as follows. Transcriptional activator that binds to E2F sites, these sites are present in the promoter of many genes whose products are involved in cell proliferation. May mediate growth factor-initiated signal transduction. It is likely involved in the early responses of resting cells to growth factor stimulation. Specifically required for multiciliate cell differentiation: together with MCIDAS and E2F5, binds and activate genes required for centriole biogenesis. The chain is Transcription factor E2F5 (E2f5) from Mus musculus (Mouse).